The chain runs to 191 residues: MREIGILGGTFDPPHLGHLLIAEEVRRAKELDEIWFIPTNTPPHKEDTTTSADHRTSMIQLAIDSHPSFKLNDMELKREGKSYTYDTIQELTDLYPSHTFYFIIGGDMVEFLPKWHRIDELLEMITFIGVSRPGYSLQTSYPVDFVDIPTIQLSSTILRERLQNREWIRYLLPDSVMQYVREHQLYGFGRN.

This sequence belongs to the NadD family.

The catalysed reaction is nicotinate beta-D-ribonucleotide + ATP + H(+) = deamido-NAD(+) + diphosphate. It participates in cofactor biosynthesis; NAD(+) biosynthesis; deamido-NAD(+) from nicotinate D-ribonucleotide: step 1/1. Catalyzes the reversible adenylation of nicotinate mononucleotide (NaMN) to nicotinic acid adenine dinucleotide (NaAD). The chain is Probable nicotinate-nucleotide adenylyltransferase from Oceanobacillus iheyensis (strain DSM 14371 / CIP 107618 / JCM 11309 / KCTC 3954 / HTE831).